The chain runs to 346 residues: UDP-3-O-acylglucosamine N-acyltransferase (346 aa).

Histidine 240 acts as the Proton acceptor in catalysis.

The protein belongs to the transferase hexapeptide repeat family. LpxD subfamily. Homotrimer.

The enzyme catalyses a UDP-3-O-[(3R)-3-hydroxyacyl]-alpha-D-glucosamine + a (3R)-hydroxyacyl-[ACP] = a UDP-2-N,3-O-bis[(3R)-3-hydroxyacyl]-alpha-D-glucosamine + holo-[ACP] + H(+). Its pathway is bacterial outer membrane biogenesis; LPS lipid A biosynthesis. Its function is as follows. Catalyzes the N-acylation of UDP-3-O-acylglucosamine using 3-hydroxyacyl-ACP as the acyl donor. Is involved in the biosynthesis of lipid A, a phosphorylated glycolipid that anchors the lipopolysaccharide to the outer membrane of the cell. This chain is UDP-3-O-acylglucosamine N-acyltransferase, found in Bacteroides fragilis (strain YCH46).